Reading from the N-terminus, the 226-residue chain is tRNA (guanine-N(7)-)-methyltransferase (226 aa).

The interval 1–21 (MTHPQQPHGPLRSFGRLKSRP) is disordered. Glu59, Glu84, Asp111, and Asp133 together coordinate S-adenosyl-L-methionine. Asp133 is an active-site residue. Residue Lys137 participates in substrate binding. The interval 139–144 (RHNKRR) is interaction with RNA. Substrate-binding positions include Asp169 and 206–209 (TRYE).

This sequence belongs to the class I-like SAM-binding methyltransferase superfamily. TrmB family.

It carries out the reaction guanosine(46) in tRNA + S-adenosyl-L-methionine = N(7)-methylguanosine(46) in tRNA + S-adenosyl-L-homocysteine. The protein operates within tRNA modification; N(7)-methylguanine-tRNA biosynthesis. In terms of biological role, catalyzes the formation of N(7)-methylguanine at position 46 (m7G46) in tRNA. The chain is tRNA (guanine-N(7)-)-methyltransferase from Caulobacter sp. (strain K31).